The chain runs to 508 residues: ATP synthase subunit alpha, chloroplastic (508 aa).

171 to 178 (GDRQTGKT) provides a ligand contact to ATP.

The protein belongs to the ATPase alpha/beta chains family. As to quaternary structure, F-type ATPases have 2 components, CF(1) - the catalytic core - and CF(0) - the membrane proton channel. CF(1) has five subunits: alpha(3), beta(3), gamma(1), delta(1), epsilon(1). CF(0) has four main subunits: a, b, b' and c.

Its subcellular location is the plastid. It localises to the chloroplast thylakoid membrane. The enzyme catalyses ATP + H2O + 4 H(+)(in) = ADP + phosphate + 5 H(+)(out). Its function is as follows. Produces ATP from ADP in the presence of a proton gradient across the membrane. The alpha chain is a regulatory subunit. This is ATP synthase subunit alpha, chloroplastic from Gnetum parvifolium (Small-leaved jointfir).